The following is a 334-amino-acid chain: Probable GTP 3',8-cyclase (334 aa).

Residues 24 to 256 (PYGRKVTGLR…RKKYMIDGVE (233 aa)) enclose the Radical SAM core domain. GTP is bound at residue Arg33. [4Fe-4S] cluster-binding residues include Cys40 and Cys44. Tyr46 provides a ligand contact to S-adenosyl-L-methionine. Cys47 lines the [4Fe-4S] cluster pocket. Residue Lys85 coordinates GTP. Position 89 (Gly89) interacts with S-adenosyl-L-methionine. Thr113 contributes to the GTP binding site. Residue Ser137 coordinates S-adenosyl-L-methionine. GTP is bound at residue Lys176. The [4Fe-4S] cluster site is built by Cys269 and Cys272. 274–276 (RLR) is a binding site for GTP. [4Fe-4S] cluster is bound at residue Cys286.

This sequence belongs to the radical SAM superfamily. MoaA family. [4Fe-4S] cluster is required as a cofactor.

It carries out the reaction GTP + AH2 + S-adenosyl-L-methionine = (8S)-3',8-cyclo-7,8-dihydroguanosine 5'-triphosphate + 5'-deoxyadenosine + L-methionine + A + H(+). It participates in cofactor biosynthesis; molybdopterin biosynthesis. Catalyzes the cyclization of GTP to (8S)-3',8-cyclo-7,8-dihydroguanosine 5'-triphosphate. This chain is Probable GTP 3',8-cyclase, found in Methanosarcina mazei (strain ATCC BAA-159 / DSM 3647 / Goe1 / Go1 / JCM 11833 / OCM 88) (Methanosarcina frisia).